The sequence spans 354 residues: 40 kDa protein (354 aa).

Interacts with capsid protein; this interaction may play a role in vector transmission of the virus.

Its function is as follows. Involved in transmission of the virus by the vector nematode Paratrichodorus pachydermus. In Bidens pilosa (Hairy beggarticks), this protein is 40 kDa protein.